The chain runs to 183 residues: Protein SHI RELATED SEQUENCE 6 (183 aa).

Cys-41, Cys-44, Cys-52, Cys-57, Cys-61, and Cys-68 together coordinate Zn(2+). The zn(2)-C6 fungal-type; degenerate DNA-binding region spans 41-68 (CRDCGNRAKKECLFERCRTCCKSRGYNC). Low complexity predominate over residues 79-88 (SSATRSSSSP). Positions 79–121 (SSATRSSSSPSERKKKLKIDKQSSPNVSLLPTTTSRQERGFRE) are disordered. Over residues 100-113 (QSSPNVSLLPTTTS) the composition is skewed to polar residues. The Required for homo- and heterodimerization signature appears at 157–160 (ISGH).

Belongs to the SHI protein family.

It localises to the nucleus. In terms of biological role, transcription activator that binds DNA on 5'-ACTCTAC-3' and promotes auxin homeostasis-regulating gene expression (e.g. YUC genes), as well as genes affecting stamen development, cell expansion and timing of flowering. Synergistically with other SHI-related proteins, regulates gynoecium, stamen and leaf development in a dose-dependent manner, controlling apical-basal patterning. Promotes style and stigma formation, and influences vascular development during gynoecium development. May also have a role in the formation and/or maintenance of the shoot apical meristem (SAM). In Arabidopsis thaliana (Mouse-ear cress), this protein is Protein SHI RELATED SEQUENCE 6 (SRS6).